The primary structure comprises 291 residues: Porphobilinogen deaminase (291 aa).

Cys-237 bears the S-(dipyrrolylmethanemethyl)cysteine mark.

The protein belongs to the HMBS family. In terms of assembly, monomer. It depends on dipyrromethane as a cofactor.

The catalysed reaction is 4 porphobilinogen + H2O = hydroxymethylbilane + 4 NH4(+). The protein operates within porphyrin-containing compound metabolism; protoporphyrin-IX biosynthesis; coproporphyrinogen-III from 5-aminolevulinate: step 2/4. Tetrapolymerization of the monopyrrole PBG into the hydroxymethylbilane pre-uroporphyrinogen in several discrete steps. The polypeptide is Porphobilinogen deaminase (Clostridium perfringens (strain SM101 / Type A)).